Here is a 401-residue protein sequence, read N- to C-terminus: MAKEKFDRSKPHLNVGTIGHVDHGKTTLTAAITTTLAKAIGGKNKAVAYDQIDNAPEEKARGITIATSHQEYETANRHYAHVDCPGHADYVKNMITGAAQMDAAILVVSATDGPMPQTKEHILLARQVGVPYVIVFINKADMLAADERAEMIEMVEMDVRELLNKYSFPGDTTPIVHGSAVKALEGDESEIGMPAILKLMEALDTFVPNPKRVIDKPFLMPVEDVFSITGRGTVATGRVEQGVLKVNDEVEIIGIRPTTKTVVTGIEMFRKLLDQAEAGDNIGALLRGTKKEEIERGQVLAKPGSITPHKKFAAEVYVLTKDEGGRHTPFINNYRPQFYFRTTDVTGVCNLPNGVEMVMPGDNVSLTVELISPIAMDKGLKFAIREGGRTIGSGVVAEITE.

The tr-type G domain maps to 10-211 (KPHLNVGTIG…ALDTFVPNPK (202 aa)). Residues 19–26 (GHVDHGKT) are G1. 19 to 26 (GHVDHGKT) is a binding site for GTP. A Mg(2+)-binding site is contributed by threonine 26. A G2 region spans residues 62 to 66 (GITIA). Residues 83–86 (DCPG) form a G3 region. Residues 83 to 87 (DCPGH) and 138 to 141 (NKAD) contribute to the GTP site. The interval 138–141 (NKAD) is G4. Residues 179–181 (SAV) are G5.

This sequence belongs to the TRAFAC class translation factor GTPase superfamily. Classic translation factor GTPase family. EF-Tu/EF-1A subfamily. In terms of assembly, monomer.

The protein resides in the cytoplasm. The catalysed reaction is GTP + H2O = GDP + phosphate + H(+). Its function is as follows. GTP hydrolase that promotes the GTP-dependent binding of aminoacyl-tRNA to the A-site of ribosomes during protein biosynthesis. The polypeptide is Elongation factor Tu (Leptospira interrogans serogroup Icterohaemorrhagiae serovar copenhageni (strain Fiocruz L1-130)).